Reading from the N-terminus, the 254-residue chain is uncharacterized protein (254 aa).

The signal sequence occupies residues 1 to 22; that stretch reads MKRLKKIVLCISFLFLTIFIGG. C23 carries the N-palmitoyl cysteine lipid modification. The S-diacylglycerol cysteine moiety is linked to residue C23.

This sequence belongs to the staphylococcal tandem lipoprotein family.

Its subcellular location is the cell membrane. This is an uncharacterized protein from Staphylococcus aureus (strain MSSA476).